Consider the following 345-residue polypeptide: Glycerol-3-phosphate dehydrogenase [NAD(P)+] (345 aa).

S23, Y24, H44, and K118 together coordinate NADPH. Sn-glycerol 3-phosphate contacts are provided by K118, G147, and T149. NADPH is bound at residue A151. Sn-glycerol 3-phosphate contacts are provided by K203, D256, S266, R267, and N268. The active-site Proton acceptor is K203. R267 contacts NADPH. NADPH-binding residues include V291 and E293.

This sequence belongs to the NAD-dependent glycerol-3-phosphate dehydrogenase family.

It is found in the cytoplasm. The enzyme catalyses sn-glycerol 3-phosphate + NAD(+) = dihydroxyacetone phosphate + NADH + H(+). It carries out the reaction sn-glycerol 3-phosphate + NADP(+) = dihydroxyacetone phosphate + NADPH + H(+). The protein operates within membrane lipid metabolism; glycerophospholipid metabolism. In terms of biological role, catalyzes the reduction of the glycolytic intermediate dihydroxyacetone phosphate (DHAP) to sn-glycerol 3-phosphate (G3P), the key precursor for phospholipid synthesis. This is Glycerol-3-phosphate dehydrogenase [NAD(P)+] from Vibrio campbellii (strain ATCC BAA-1116).